Reading from the N-terminus, the 475-residue chain is MADMQNLVERLERAVGRLEAVSHTSDMHRGYGDSPSKAGAAPYVQVFDSLLAGPVAEYLKISKEIGGDVQKHAEMVHTGLKLERALLVTASQCQQPADNKLSDLLAPISEQIKEVITFREKNRGSKLFNHLSAVSESIQALGWVAMAPKPGPYVKEMNDAAMFYTNRVLKEYKDVDKKHVDWVKAYLSIWTELQAYIKEFHTTGLAWSKTGPVAKELSGLPSGPSAGSGPPPPPPGPPPPPVSTSSGSDESASRSALFAQINQGESITHALKHVSDDMKTHKNPALKAQSGPLRSGPKPFSAPKPQTSQSPKPATKKEPAVLELEGKKWRVENQENVSNLVIEDTELKQVAYIYKCVSTTLQIKGKINSITVDNCKKLGLVFDDVVGIVEIINSGDVKVQVMGKVPTISINKTDGCHAYLSKNSLDCEIVSAKSSEMNVLIPTEGGDFNEFPVPEQFKTLWNGQKLVTTVTEIAG.

Residue alanine 2 is modified to N-acetylalanine. Tyrosine 31 bears the Phosphotyrosine mark. Serine 34 is subject to Phosphoserine. Lysine 81 is subject to N6-acetyllysine. Disordered stretches follow at residues 216 to 255 and 278 to 318; these read ELSGLPSGPSAGSGPPPPPPGPPPPPVSTSSGSDESASRS and MKTH…TKKE. A compositionally biased stretch (low complexity) spans 218–228; sequence SGLPSGPSAGS. Pro residues predominate over residues 229 to 242; it reads GPPPPPPGPPPPPV. Low complexity predominate over residues 243 to 255; it reads STSSGSDESASRS. Lysine 287 bears the N6-methyllysine mark. Phosphoserine occurs at positions 290, 295, and 301. Threonine 307 is modified (phosphothreonine). A phosphoserine mark is found at serine 308 and serine 310. The C-CAP/cofactor C-like domain maps to 313–453; sequence PATKKEPAVL…EGGDFNEFPV (141 aa). A Glycyl lysine isopeptide (Lys-Gly) (interchain with G-Cter in SUMO1) cross-link involves residue lysine 348.

This sequence belongs to the CAP family. As to quaternary structure, homodimer. Binds actin monomers.

It localises to the cell membrane. Directly regulates filament dynamics and has been implicated in a number of complex developmental and morphological processes, including mRNA localization and the establishment of cell polarity. The chain is Adenylyl cyclase-associated protein 1 (CAP1) from Pongo abelii (Sumatran orangutan).